A 298-amino-acid chain; its full sequence is ATP phosphoribosyltransferase (298 aa).

It belongs to the ATP phosphoribosyltransferase family. Long subfamily. Mg(2+) is required as a cofactor.

Its subcellular location is the cytoplasm. It catalyses the reaction 1-(5-phospho-beta-D-ribosyl)-ATP + diphosphate = 5-phospho-alpha-D-ribose 1-diphosphate + ATP. Its pathway is amino-acid biosynthesis; L-histidine biosynthesis; L-histidine from 5-phospho-alpha-D-ribose 1-diphosphate: step 1/9. Feedback inhibited by histidine. Functionally, catalyzes the condensation of ATP and 5-phosphoribose 1-diphosphate to form N'-(5'-phosphoribosyl)-ATP (PR-ATP). Has a crucial role in the pathway because the rate of histidine biosynthesis seems to be controlled primarily by regulation of HisG enzymatic activity. This Vibrio parahaemolyticus serotype O3:K6 (strain RIMD 2210633) protein is ATP phosphoribosyltransferase.